A 71-amino-acid chain; its full sequence is Putative RNA-binding regulatory peptide (71 aa).

In terms of assembly, interacts with IGF2BP1 (via KH3 and KH4 domains); the interaction results in increased binding of IGF2BP1 to N6-methyladenosine (m6A)-containing mRNAs. As to expression, detected in colon (at protein level).

Its function is as follows. Enhances binding of IGF2BP1 to N6-methyladenosine (m6A)-containing mRNAs, thereby contributing to increased mRNA stability. Also increases the interaction of IGF2BP1 with RNA stabilizers ELAVL1/HUR, MATR3 and PABPC1, and increases the interaction of RNA stabilizers ELAVL1/HUR, MATR3 and PABPC1 with m6A-containing mRNAs. Contributes to MYC stability by enhancing binding of IGF2BP1 to m6A-containing MYC mRNAs and increasing recruitment of RNA stabilizing proteins to m6A-containing MYC mRNAs. This chain is Putative RNA-binding regulatory peptide, found in Homo sapiens (Human).